The sequence spans 101 residues: Gamma-secretase subunit PEN-2 (101 aa).

Residues 1 to 17 (MNLERVSNEEKLNLCRK) lie on the Cytoplasmic side of the membrane. The helical intramembrane region spans 18-36 (YYLGGFAFLPFLWLVNIFW). Residues 37-57 (FFREAFLVPAYTEQSQIKGYV) are Cytoplasmic-facing. Residues 58–78 (WRSAVGFLFWVIVLTSWITIF) form a helical membrane-spanning segment. Residues 79 to 101 (QIYRPRWGALGDYLSFTIPLGTP) are Lumenal-facing.

Belongs to the PEN-2 family. The functional gamma-secretase complex is composed of at least four polypeptides: a presenilin homodimer (PSEN1 or PSEN2), nicastrin (NCSTN), APH1 (APH1A or APH1B) and PSENEN. Widely expressed. Expressed in leukocytes, lung, placenta, small intestine, liver, kidney, spleen thymus, skeletal muscle, heart and brain.

It localises to the endoplasmic reticulum membrane. Its subcellular location is the golgi apparatus. The protein resides in the golgi stack membrane. The protein localises to the cell membrane. It is found in the membrane. In terms of biological role, essential subunit of the gamma-secretase complex, an endoprotease complex that catalyzes the intramembrane cleavage of integral membrane proteins such as Notch receptors and APP (amyloid-beta precursor protein). The gamma-secretase complex plays a role in Notch and Wnt signaling cascades and regulation of downstream processes via its role in processing key regulatory proteins, and by regulating cytosolic CTNNB1 levels. PSENEN modulates both endoproteolysis of presenilin and gamma-secretase activity. The chain is Gamma-secretase subunit PEN-2 (PSENEN) from Homo sapiens (Human).